We begin with the raw amino-acid sequence, 453 residues long: Exopolyphosphatase PRUNE1 (453 aa).

Met-1 is modified (N-acetylmethionine). Mn(2+) is bound by residues Asp-28, Asp-30, Asp-106, and Asp-179. The DHH motif signature appears at 106–108; it reads DHH. Residues 393–420 form an essential for homodimerization region; it reads SLISGLSQDEEDPPLPPTPMNSLVDECP. The interval 395-421 is disordered; that stretch reads ISGLSQDEEDPPLPPTPMNSLVDECPL. At Ser-399 the chain carries Phosphoserine. Thr-410 carries the phosphothreonine modification. The residue at position 414 (Ser-414) is a Phosphoserine.

This sequence belongs to the PPase class C family. Prune subfamily. As to quaternary structure, homooligomer. Able to homodimerize via its C-terminal domain. Interacts with NME1. Interacts with GSK3; at focal adhesion complexes where paxillin and vinculin are colocalized. Interacts with alpha and beta tubulin. It depends on Mn(2+) as a cofactor. As to expression, ubiquitously expressed. Seems to be overexpressed in aggressive sarcoma subtypes, such as leiomyosarcomas and malignant fibrous histiocytomas (MFH) as well as in the less malignant liposarcomas.

The protein localises to the cytoplasm. It is found in the nucleus. It localises to the cell junction. The protein resides in the focal adhesion. The catalysed reaction is diphosphate + H2O = 2 phosphate + H(+). Activated by magnesium ions and inhibited by manganese ions. Inhibited by dipyridamole, moderately sensitive to IBMX and inhibited by vinpocetine. Functionally, phosphodiesterase (PDE) that has higher activity toward cAMP than cGMP, as substrate. Plays a role in cell proliferation, migration and differentiation, and acts as a negative regulator of NME1. Plays a role in the regulation of neurogenesis. Involved in the regulation of microtubule polymerization. In Homo sapiens (Human), this protein is Exopolyphosphatase PRUNE1.